The following is a 430-amino-acid chain: SH3 domain-containing protein PJ696.02 (430 aa).

Positions 237-372 (EPEDIWGPSS…KPKFKQDSLG (136 aa)) are disordered. Residues 263-277 (RRGDSYRSNRSRAHD) show a composition bias toward basic and acidic residues. A Phosphoserine modification is found at S285. The segment covering 304–313 (SKMDNRRSKY) has biased composition (basic and acidic residues). T316 carries the post-translational modification Phosphothreonine. Phosphoserine is present on residues S318 and S324. The residue at position 325 (Y325) is a Phosphotyrosine. 3 positions are modified to phosphoserine: S326, S354, and S406. Low complexity predominate over residues 333 to 358 (VYSSDVSTESSSQFSSRSSEYSKPSR). Residues 371 to 430 (LGPNQARAMYSFAGEQPGDLSFQKGDIIDIVERSGSHDDWWTGRIGYREGIFPANYVKLS) form the SH3 domain.

Belongs to the SH3YL1 family.

The sequence is that of SH3 domain-containing protein PJ696.02 from Schizosaccharomyces pombe (strain 972 / ATCC 24843) (Fission yeast).